A 310-amino-acid chain; its full sequence is Syntaxin-related protein KNOLLE (310 aa).

Methionine 1 is modified (N-acetylmethionine). The Cytoplasmic segment spans residues 1 to 283 (MNDLMTKSFM…AKSHQRNSRK (283 aa)). A coiled-coil region spans residues 94–159 (NEIVSGLRKA…FQGLRQKMMS (66 aa)). The t-SNARE coiled-coil homology domain maps to 212 to 274 (VVEIQDRYDA…ADGANELKTA (63 aa)). The helical; Anchor for type IV membrane protein transmembrane segment at 284 to 304 (WMCIGIIVLLLIILIVVIPII) threads the bilayer. Topologically, residues 305 to 310 (TSFSSS) are vesicular.

Belongs to the syntaxin family. As to quaternary structure, interacts with SNAP33 and/or NPSN11 to form a t-SNARE complex and with KEULE. In terms of tissue distribution, abundant in flowers and developing siliques. A low level expression is seen in the seedlings, roots, and leaves.

Its subcellular location is the membrane. Functionally, involved in cytokinesis. Acts as a cell plate-specific syntaxin, required for the fusion of vesicles at the plane of cell division. The sequence is that of Syntaxin-related protein KNOLLE (KN) from Arabidopsis thaliana (Mouse-ear cress).